The primary structure comprises 343 residues: Dihydroorotate dehydrogenase (quinone) (343 aa).

Residues 61–65 (AGLDK) and Thr-85 each bind FMN. Residue Lys-65 participates in substrate binding. Residue 110-114 (NRMGF) participates in substrate binding. 2 residues coordinate FMN: Asn-138 and Asn-171. Position 171 (Asn-171) interacts with substrate. Ser-174 acts as the Nucleophile in catalysis. Asn-176 is a binding site for substrate. Positions 216 and 244 each coordinate FMN. 245 to 246 (NT) is a substrate binding site. Residues Gly-267, Gly-296, and 317 to 318 (YS) each bind FMN.

It belongs to the dihydroorotate dehydrogenase family. Type 2 subfamily. As to quaternary structure, monomer. FMN is required as a cofactor.

It localises to the cell membrane. It catalyses the reaction (S)-dihydroorotate + a quinone = orotate + a quinol. It functions in the pathway pyrimidine metabolism; UMP biosynthesis via de novo pathway; orotate from (S)-dihydroorotate (quinone route): step 1/1. Functionally, catalyzes the conversion of dihydroorotate to orotate with quinone as electron acceptor. The chain is Dihydroorotate dehydrogenase (quinone) from Pseudomonas syringae pv. tomato (strain ATCC BAA-871 / DC3000).